The chain runs to 205 residues: MKVVAFERSVQGTGASRRLRNSGKTPGIIYGGAAEPKMIELDHNALWHALKKEAFHSSILDLEVAGKSEKALLRAFQMHPFKPLVLHVDFQRVSANDKIHVKVPLHFMNQETAPGVKLGHGLVNHIVNDLEVSCLPADLPEFIEVDVGAMELGQTLHLSDLKLPKGVTVITHGDDNPAIASISQPAGAVSEAAEGGEAAGETPAA.

The segment at 185 to 205 (PAGAVSEAAEGGEAAGETPAA) is disordered. Residues 186 to 205 (AGAVSEAAEGGEAAGETPAA) are compositionally biased toward low complexity.

This sequence belongs to the bacterial ribosomal protein bL25 family. CTC subfamily. Part of the 50S ribosomal subunit; part of the 5S rRNA/L5/L18/L25 subcomplex. Contacts the 5S rRNA. Binds to the 5S rRNA independently of L5 and L18.

In terms of biological role, this is one of the proteins that binds to the 5S RNA in the ribosome where it forms part of the central protuberance. The chain is Large ribosomal subunit protein bL25 from Cupriavidus taiwanensis (strain DSM 17343 / BCRC 17206 / CCUG 44338 / CIP 107171 / LMG 19424 / R1) (Ralstonia taiwanensis (strain LMG 19424)).